A 234-amino-acid polypeptide reads, in one-letter code: Small ribosomal subunit protein uS3 (234 aa).

The 69-residue stretch at 39–107 (IRKFLKKELY…EVSINIKEVK (69 aa)) folds into the KH type-2 domain.

This sequence belongs to the universal ribosomal protein uS3 family. Part of the 30S ribosomal subunit. Forms a tight complex with proteins S10 and S14.

Its function is as follows. Binds the lower part of the 30S subunit head. Binds mRNA in the 70S ribosome, positioning it for translation. This is Small ribosomal subunit protein uS3 from Helicobacter pylori (strain G27).